The following is a 61-amino-acid chain: Small ribosomal subunit protein uS14 (61 aa).

4 residues coordinate Zn(2+): cysteine 24, cysteine 27, cysteine 40, and cysteine 43.

This sequence belongs to the universal ribosomal protein uS14 family. Zinc-binding uS14 subfamily. Part of the 30S ribosomal subunit. Contacts proteins S3 and S10. It depends on Zn(2+) as a cofactor.

Binds 16S rRNA, required for the assembly of 30S particles and may also be responsible for determining the conformation of the 16S rRNA at the A site. The polypeptide is Small ribosomal subunit protein uS14 (Nitratidesulfovibrio vulgaris (strain DSM 19637 / Miyazaki F) (Desulfovibrio vulgaris)).